The following is a 377-amino-acid chain: Succinyl-diaminopimelate desuccinylase (377 aa).

Position 67 (histidine 67) interacts with Zn(2+). Aspartate 69 is an active-site residue. A Zn(2+)-binding site is contributed by aspartate 100. Catalysis depends on glutamate 134, which acts as the Proton acceptor. Zn(2+) is bound by residues glutamate 135, glutamate 163, and histidine 349.

This sequence belongs to the peptidase M20A family. DapE subfamily. In terms of assembly, homodimer. It depends on Zn(2+) as a cofactor. Co(2+) is required as a cofactor.

It carries out the reaction N-succinyl-(2S,6S)-2,6-diaminopimelate + H2O = (2S,6S)-2,6-diaminopimelate + succinate. It functions in the pathway amino-acid biosynthesis; L-lysine biosynthesis via DAP pathway; LL-2,6-diaminopimelate from (S)-tetrahydrodipicolinate (succinylase route): step 3/3. Its function is as follows. Catalyzes the hydrolysis of N-succinyl-L,L-diaminopimelic acid (SDAP), forming succinate and LL-2,6-diaminopimelate (DAP), an intermediate involved in the bacterial biosynthesis of lysine and meso-diaminopimelic acid, an essential component of bacterial cell walls. This is Succinyl-diaminopimelate desuccinylase from Dechloromonas aromatica (strain RCB).